We begin with the raw amino-acid sequence, 237 residues long: Uridylate kinase (237 aa).

An ATP-binding site is contributed by 11 to 14 (KLSG). Residue glycine 53 coordinates UMP. 2 residues coordinate ATP: glycine 54 and arginine 58. UMP-binding positions include aspartate 73 and 134–141 (TGNPFFTT). Threonine 161, tyrosine 167, and aspartate 170 together coordinate ATP.

The protein belongs to the UMP kinase family. Homohexamer.

It localises to the cytoplasm. The catalysed reaction is UMP + ATP = UDP + ADP. Its pathway is pyrimidine metabolism; CTP biosynthesis via de novo pathway; UDP from UMP (UMPK route): step 1/1. With respect to regulation, inhibited by UTP. Catalyzes the reversible phosphorylation of UMP to UDP. The polypeptide is Uridylate kinase (Nitrosomonas europaea (strain ATCC 19718 / CIP 103999 / KCTC 2705 / NBRC 14298)).